The chain runs to 298 residues: Cyclin-dependent kinase 2 homolog (298 aa).

The region spanning 4–284 (YHKMEKIGEG…AKEALKHDYF (281 aa)) is the Protein kinase domain. ATP is bound by residues 10-18 (IGEGTYGVV) and Lys32. Thr14 is subject to Phosphothreonine. Tyr15 is subject to Phosphotyrosine. Asp125 (proton acceptor) is an active-site residue. Position 158 is a phosphothreonine (Thr158).

This sequence belongs to the protein kinase superfamily. CMGC Ser/Thr protein kinase family. CDC2/CDKX subfamily. In terms of assembly, may form a complex composed of at least the catalytic subunit CRK2 and a cyclin. The cofactor is Mg(2+).

The protein localises to the cytoplasm. The catalysed reaction is L-seryl-[protein] + ATP = O-phospho-L-seryl-[protein] + ADP + H(+). It catalyses the reaction L-threonyl-[protein] + ATP = O-phospho-L-threonyl-[protein] + ADP + H(+). It carries out the reaction [DNA-directed RNA polymerase] + ATP = phospho-[DNA-directed RNA polymerase] + ADP + H(+). Phosphorylation at Thr-14 or Tyr-15 inactivates the enzyme, while phosphorylation at Thr-158 activates it. Its function is as follows. Serine/threonine-protein kinase. Involved in the control of the cell cycle. Required for entry into S-phase and mitosis. Probable component of the kinase complex that phosphorylates the repetitive C-terminus of RNA polymerase II. The protein is Cyclin-dependent kinase 2 homolog of Theileria annulata.